We begin with the raw amino-acid sequence, 21 residues long: Granulitoxin (21 aa).

Residues 1–21 form a disordered region; sequence AKTGILDSDGPTVAGNSLSGT.

Its subcellular location is the secreted. It localises to the nematocyst. Injection into mice produces severe neurotoxic effects such as circular movements, aggressive behavior, dyspnea, tonic-clonic convulsion and death. The sequence is that of Granulitoxin from Bunodosoma cangicum (Sea anemone).